Consider the following 227-residue polypeptide: Lysosomal-associated transmembrane protein 4B (227 aa).

Transmembrane regions (helical) follow at residues 26 to 46 (ILLG…LLSA), 72 to 92 (MCIA…ATYG), 100 to 120 (WIIP…LVAI), and 153 to 173 (CLVL…GYLI). The interval 205-222 (PPYDDATAVTGTAKEPPP) is required for NEDD4 interaction.

It belongs to the LAPTM4/LAPTM5 transporter family. Homooligomer; upon reaching the lysosomes. Interacts with MCOLN1. Interacts with NEDD4; may play a role in the lysosomal sorting of LAPTM4B; enhances HGS association with NEDD4; mediates inhibition of EGFR degradation. Interacts with PIP5K1C; promotes SNX5 association with LAPTM4B; kinase activity of PIP5K1C is required; interaction is regulated by phosphatidylinositol 4,5-bisphosphate generated by PIP5K1C. Interacts with HGS; promotes HGS ubiquitination. Interacts with SNX5. Interacts with SLC3A2 and SLC7A5; recruits SLC3A2 and SLC7A5 to lysosomes to promote leucine uptake into these organelles and is required for mTORC1 activation. Interacts with LRRC32; decreases TGFB1 production in regulatory T cells. Interacts with BECN1; competes with EGFR for LAPTM4B binding; regulates EGFR activity. Interacts with EGFR; positively correlates with EGFR activation. In terms of processing, undergoes proteolytic cleavage following delivery to the lysosomes. Post-translationally, ubiquitinated by NEDD4.

The protein localises to the endomembrane system. It localises to the late endosome membrane. The protein resides in the cell membrane. It is found in the cell projection. Its subcellular location is the lysosome membrane. The protein localises to the endosome membrane. It localises to the endosome. The protein resides in the multivesicular body membrane. It is found in the multivesicular body lumen. Its function is as follows. Required for optimal lysosomal function. Blocks EGF-stimulated EGFR intraluminal sorting and degradation. Conversely by binding with the phosphatidylinositol 4,5-bisphosphate, regulates its PIP5K1C interaction, inhibits HGS ubiquitination and relieves LAPTM4B inhibition of EGFR degradation. Recruits SLC3A2 and SLC7A5 (the Leu transporter) to the lysosome, promoting entry of leucine and other essential amino acid (EAA) into the lysosome, stimulating activation of proton-transporting vacuolar (V)-ATPase protein pump (V-ATPase) and hence mTORC1 activation. Plays a role as negative regulator of TGFB1 production in regulatory T cells. Binds ceramide and facilitates its exit from late endosome in order to control cell death pathways. This chain is Lysosomal-associated transmembrane protein 4B, found in Rattus norvegicus (Rat).